Consider the following 168-residue polypeptide: Photosystem I assembly protein Ycf3 (168 aa).

3 TPR repeats span residues 35–68 (AFTY…EIDP), 72–105 (SYIL…NPFL), and 120–153 (GEQA…TPGN).

The protein belongs to the Ycf3 family.

The protein resides in the plastid. It localises to the chloroplast thylakoid membrane. Functionally, essential for the assembly of the photosystem I (PSI) complex. May act as a chaperone-like factor to guide the assembly of the PSI subunits. This is Photosystem I assembly protein Ycf3 from Phalaenopsis aphrodite subsp. formosana (Moth orchid).